Consider the following 491-residue polypeptide: Glutamyl-tRNA(Gln) amidotransferase subunit A (491 aa).

Residues Lys78 and Ser158 each act as charge relay system in the active site. Ser182 (acyl-ester intermediate) is an active-site residue.

Belongs to the amidase family. GatA subfamily. As to quaternary structure, heterotrimer of A, B and C subunits.

It catalyses the reaction L-glutamyl-tRNA(Gln) + L-glutamine + ATP + H2O = L-glutaminyl-tRNA(Gln) + L-glutamate + ADP + phosphate + H(+). Its function is as follows. Allows the formation of correctly charged Gln-tRNA(Gln) through the transamidation of misacylated Glu-tRNA(Gln) in organisms which lack glutaminyl-tRNA synthetase. The reaction takes place in the presence of glutamine and ATP through an activated gamma-phospho-Glu-tRNA(Gln). The sequence is that of Glutamyl-tRNA(Gln) amidotransferase subunit A from Nitrobacter winogradskyi (strain ATCC 25391 / DSM 10237 / CIP 104748 / NCIMB 11846 / Nb-255).